The primary structure comprises 552 residues: Kumamolisin (552 aa).

The segment covering 1–17 (MSDMEKPWKEEEKREVL) has biased composition (basic and acidic residues). The tract at residues 1 to 34 (MSDMEKPWKEEEKREVLAGHARRQAPQAVDKGPV) is disordered. The region spanning 193–546 (AYTPLDVAQA…IRLLQALLPS (354 aa)) is the Peptidase S53 domain. Catalysis depends on charge relay system residues Glu-266, Asp-270, and Ser-466. The Ca(2+) site is built by Asp-504, Ile-505, Gly-522, Gly-524, and Asp-526.

As to quaternary structure, forms monomeric and dimeric crystals. Requires Ca(2+) as cofactor. Post-translationally, autocatalytically processed.

Its subcellular location is the secreted. It carries out the reaction The enzyme preferentially hydrolyzes peptides having an Ala or Pro residue at P2 position and prefers such charged amino acid residues as Glu or Arg at the P2' position. In the oxidized insulin B chain, kumamolysin preferentially cleaves between Leu(15) and Tyr(16).. With respect to regulation, inactivated at 22.4 and 37 degrees Celsius, but not at 60 degrees Celsius, by aldehyde-type inhibitors such as acetyl-Ile-Ala-Phe-CHO and acetyl-Ile-Pro-Phe-CHO. Insensitive to the known carboxyl proteinase inhibitors pepstatin, diazoacetyl-DL-norleucine methyl ester (DAN) and 1,2-epoxy-3-(p-nitrophenoxy)propane (EPNP). Not inhibited by Ala-Ala-Phe-chloromethylketone, an inhibitor of the human tripeptidyl-peptidase 1. Its function is as follows. Thermostable pepstatin-insensitive serine-carboxyl proteinase. Preferentially hydrolyzes synthetic peptides having an Ala or Pro residue at the P2 position and charged amino acids such as Glu or Arg at the P2' position. In vitro, specifically hydrolyzes the Leu-15-Tyr-16 peptide bond in oxidized insulin B-chain. Additional cleavage of oxidized insulin B-chain at Phe-25-Tyr-26 is detected at a considerably lower rate. Can hydrolyze collagen and the chromogenic substrate azocoll. Shows lower activity with albumin and casein. Shows very weak tripeptidyl peptidase activity. This chain is Kumamolisin, found in Bacillus sp. (strain MN-32).